An 89-amino-acid chain; its full sequence is Putative membrane protein insertion efficiency factor (89 aa).

The interval 69 to 89 is disordered; it reads DPVPPAHTERGGTMCPSRLPE.

The protein belongs to the UPF0161 family.

The protein localises to the cell inner membrane. Its function is as follows. Could be involved in insertion of integral membrane proteins into the membrane. The sequence is that of Putative membrane protein insertion efficiency factor from Paramagnetospirillum magneticum (strain ATCC 700264 / AMB-1) (Magnetospirillum magneticum).